Consider the following 223-residue polypeptide: Sigma non-opioid intracellular receptor 1 (223 aa).

Over 1-7 (MAVLSSR) the chain is Lumenal. The helical transmembrane segment at 8-29 (AMRAALGLAVLAVVIQLLRTWL) threads the bilayer. The Cytoplasmic segment spans residues 30–223 (SSKSYLFNQK…HTYLSELGLS (194 aa)). Residues 98-105 (SLTEYILL) form an important for ligand-binding region. Residues 176–223 (FIPSTMGFALADTIFSTQDFCTLFYTFRIYARCLLLETHTYLSELGLS) form a C-terminal hydrophobic region region.

The protein belongs to the ERG2 family. As to quaternary structure, homotrimer.

The protein resides in the nucleus inner membrane. It is found in the nucleus outer membrane. Its subcellular location is the nucleus envelope. It localises to the cytoplasmic vesicle. The protein localises to the endoplasmic reticulum membrane. The protein resides in the membrane. Functionally, may function in lipid transport from the endoplasmic reticulum and be involved in a wide array of cellular functions probably through regulation of the biogenesis of lipid microdomains at the plasma membrane. May regulate calcium efflux at the endoplasmic reticulum. The protein is Sigma non-opioid intracellular receptor 1 (SIGMAR1) of Taricha granulosa (Roughskin newt).